A 92-amino-acid chain; its full sequence is MKLGVTVLSVALLVAALCPPALSAPMGSDPPTACCFSYTLRKLPRHFVIDYFETTSLCSQPAVVFQTKKGRQVCANPSESWVQEYVDDLELN.

Residues 1–23 (MKLGVTVLSVALLVAALCPPALS) form the signal peptide. Intrachain disulfides connect C34–C58 and C35–C74.

Belongs to the intercrine beta (chemokine CC) family. In terms of assembly, homodimer.

It localises to the secreted. In terms of biological role, monokine with inflammatory and chemokinetic properties. The polypeptide is C-C motif chemokine 4 (CCL4) (Oryctolagus cuniculus (Rabbit)).